We begin with the raw amino-acid sequence, 79 residues long: Delta-hormotoxin-Cpt1a (79 aa).

Residues 1 to 20 form the signal peptide; the sequence is MKTQVLAVFVLCVLFCLAES. Residues 21–31 constitute a propeptide that is removed on maturation; that stretch reads RTTLNKRIDIA. Intrachain disulfides connect cysteine 36-cysteine 75, cysteine 38-cysteine 66, and cysteine 56-cysteine 76.

The protein belongs to the sea anemone sodium channel inhibitory toxin family.

The protein localises to the secreted. The protein resides in the nematocyst. In neuromuscular preparation of crustaceans, the toxin increased neurotransmitter release, causing repetitive firing of the axons. May affect sodium channels (Nav). This Calliactis parasitica (Sea anemone) protein is Delta-hormotoxin-Cpt1a.